The primary structure comprises 183 residues: UPF0200 protein MmarC7_0527 (183 aa).

8–15 (GMPGSGKS) contributes to the ATP binding site.

The protein belongs to the UPF0200 family.

This is UPF0200 protein MmarC7_0527 from Methanococcus maripaludis (strain C7 / ATCC BAA-1331).